A 539-amino-acid polypeptide reads, in one-letter code: Phosphoenolpyruvate carboxykinase (ATP) (539 aa).

Positions 64, 206, and 212 each coordinate substrate. ATP is bound by residues Lys212, His231, and 247–255 (GLSGTGKTT). Mn(2+) is bound by residues Lys212 and His231. Asp268 contributes to the Mn(2+) binding site. Residues Glu296, Arg332, 448–449 (RI), and Thr454 each bind ATP. Arg332 contributes to the substrate binding site.

Belongs to the phosphoenolpyruvate carboxykinase (ATP) family. In terms of assembly, monomer. Mn(2+) is required as a cofactor.

Its subcellular location is the cytoplasm. The catalysed reaction is oxaloacetate + ATP = phosphoenolpyruvate + ADP + CO2. It participates in carbohydrate biosynthesis; gluconeogenesis. Involved in the gluconeogenesis. Catalyzes the conversion of oxaloacetate (OAA) to phosphoenolpyruvate (PEP) through direct phosphoryl transfer between the nucleoside triphosphate and OAA. This chain is Phosphoenolpyruvate carboxykinase (ATP), found in Salmonella gallinarum (strain 287/91 / NCTC 13346).